The primary structure comprises 150 residues: Deoxyuridine 5'-triphosphate nucleotidohydrolase (150 aa).

Substrate contacts are provided by residues 69–71 (RSG), N82, 86–88 (LID), and M96.

Belongs to the dUTPase family. Mg(2+) serves as cofactor.

The catalysed reaction is dUTP + H2O = dUMP + diphosphate + H(+). It functions in the pathway pyrimidine metabolism; dUMP biosynthesis; dUMP from dCTP (dUTP route): step 2/2. This enzyme is involved in nucleotide metabolism: it produces dUMP, the immediate precursor of thymidine nucleotides and it decreases the intracellular concentration of dUTP so that uracil cannot be incorporated into DNA. This is Deoxyuridine 5'-triphosphate nucleotidohydrolase from Leptothrix cholodnii (strain ATCC 51168 / LMG 8142 / SP-6) (Leptothrix discophora (strain SP-6)).